A 141-amino-acid polypeptide reads, in one-letter code: MQLTSFTDYALRTLIYLASLPKDELTNITEVTDLFGVSRNHMVKVINRLGQLGYVHTVRGKNGGIRLMKAPQEITVGGVVRDLEPLDLVNCSVEFCHITPACRLKEKLAKAKLAFLAELDDCTIEELLSDNSELLILLARP.

One can recognise an HTH rrf2-type domain in the interval 2–129 (QLTSFTDYAL…DDCTIEELLS (128 aa)). Positions 28–51 (ITEVTDLFGVSRNHMVKVINRLGQ) form a DNA-binding region, H-T-H motif. [2Fe-2S] cluster is bound by residues C91, C96, and C102.

The cofactor is [2Fe-2S] cluster.

In terms of biological role, nitric oxide-sensitive repressor of genes involved in protecting the cell against nitrosative stress. May require iron for activity. The sequence is that of HTH-type transcriptional repressor NsrR from Vibrio campbellii (strain ATCC BAA-1116).